We begin with the raw amino-acid sequence, 139 residues long: U6 snRNA-associated Sm-like protein LSm4 (139 aa).

Methionine 1 is modified (N-acetylmethionine). One can recognise a Sm domain in the interval 2-75 (LPLSLLKTAQ…IKYLRIPDEI (74 aa)). Lysine 80 participates in a covalent cross-link: Glycyl lysine isopeptide (Lys-Gly) (interchain with G-Cter in SUMO2). Positions 87 to 139 (GRGRGGLQQQKQQKGRGMGGAGRGVFGGRGRGGIPGTGRGQPEKKPGRQAGKQ) are disordered. The span at 102–125 (RGMGGAGRGVFGGRGRGGIPGTGR) shows a compositional bias: gly residues.

It belongs to the snRNP Sm proteins family. As to quaternary structure, component of the precatalytic spliceosome (spliceosome B complex). Component of the U4/U6-U5 tri-snRNP complex, a building block of the precatalytic spliceosome (spliceosome B complex). The U4/U6-U5 tri-snRNP complex is composed of the U4, U6 and U5 snRNAs and at least PRPF3, PRPF4, PRPF6, PRPF8, PRPF31, SNRNP200, TXNL4A, SNRNP40, SNRPB, SNRPD1, SNRPD2, SNRPD3, SNRPE, SNRPF, SNRPG, DDX23, CD2BP2, PPIH, SNU13, EFTUD2, SART1 and USP39, plus LSM2, LSM3, LSM4, LSM5, LSM6, LSM7 and LSM8. LSM2, LSM3, LSM4, LSM5, LSM6, LSM7 and LSM8 form a heptameric, ring-shaped subcomplex (the LSM2-8 complex) that is part of the U4/U6-U5 tri-snRNP complex and the precatalytic spliceosome.

It is found in the nucleus. In terms of biological role, plays a role in pre-mRNA splicing as component of the U4/U6-U5 tri-snRNP complex that is involved in spliceosome assembly, and as component of the precatalytic spliceosome (spliceosome B complex). The heptameric LSM2-8 complex binds specifically to the 3'-terminal U-tract of U6 snRNA. This Bos taurus (Bovine) protein is U6 snRNA-associated Sm-like protein LSm4 (LSM4).